A 110-amino-acid chain; its full sequence is MLLEHLLIILWMQLTWVSGQQLNQSPQSMFIQEGEDVSMNCTSSSIFNTWLWYKQEPGEGPVLLIALYKAGELTSNGRLTAQFGITRKDSFLNISASIPSDVGIYFCAGQ.

The N-terminal stretch at 1-19 (MLLEHLLIILWMQLTWVSG) is a signal peptide. The Ig-like domain maps to 20–110 (QQLNQSPQSM…DVGIYFCAGQ (91 aa)). 2 N-linked (GlcNAc...) asparagine glycosylation sites follow: Asn40 and Asn93. A disulfide bridge connects residues Cys41 and Cys107.

In terms of assembly, alpha-beta TR is a heterodimer composed of an alpha and beta chain; disulfide-linked. The alpha-beta TR is associated with the transmembrane signaling CD3 coreceptor proteins to form the TR-CD3 (TcR or TCR). The assembly of alpha-beta TR heterodimers with CD3 occurs in the endoplasmic reticulum where a single alpha-beta TR heterodimer associates with one CD3D-CD3E heterodimer, one CD3G-CD3E heterodimer and one CD247 homodimer forming a stable octameric structure. CD3D-CD3E and CD3G-CD3E heterodimers preferentially associate with TR alpha and TR beta chains, respectively. The association of the CD247 homodimer is the last step of TcR assembly in the endoplasmic reticulum and is required for transport to the cell surface.

It localises to the cell membrane. Functionally, v region of the variable domain of T cell receptor (TR) alpha chain that participates in the antigen recognition. Alpha-beta T cell receptors are antigen specific receptors which are essential to the immune response and are present on the cell surface of T lymphocytes. Recognize peptide-major histocompatibility (MH) (pMH) complexes that are displayed by antigen presenting cells (APC), a prerequisite for efficient T cell adaptive immunity against pathogens. Binding of alpha-beta TR to pMH complex initiates TR-CD3 clustering on the cell surface and intracellular activation of LCK that phosphorylates the ITAM motifs of CD3G, CD3D, CD3E and CD247 enabling the recruitment of ZAP70. In turn ZAP70 phosphorylates LAT, which recruits numerous signaling molecules to form the LAT signalosome. The LAT signalosome propagates signal branching to three major signaling pathways, the calcium, the mitogen-activated protein kinase (MAPK) kinase and the nuclear factor NF-kappa-B (NF-kB) pathways, leading to the mobilization of transcription factors that are critical for gene expression and essential for T cell growth and differentiation. The T cell repertoire is generated in the thymus, by V-(D)-J rearrangement. This repertoire is then shaped by intrathymic selection events to generate a peripheral T cell pool of self-MH restricted, non-autoaggressive T cells. Post-thymic interaction of alpha-beta TR with the pMH complexes shapes TR structural and functional avidity. This Homo sapiens (Human) protein is T cell receptor alpha variable 35.